We begin with the raw amino-acid sequence, 1367 residues long: MAP3K epsilon protein kinase 2 (1367 aa).

Residues 20–274 enclose the Protein kinase domain; sequence YMLGDEIGKG…AKTLLSHPWI (255 aa). 2 HEAT repeats span residues 25 to 62 and 86 to 125; these read EIGK…EDLN and LKTK…TVYI. ATP is bound by residues 26–34 and Lys49; that span reads IGKGAYGRV. The active-site Proton acceptor is the Asp144. One copy of the HEAT 3 repeat lies at 218–256; it reads PYYDLQPMPALYRIVQDDTPPIPDSLSPDITDFLRLCFK. 2 disordered regions span residues 285–422 and 437–513; these read LRHS…GRRN and SSHS…VADG. Basic and acidic residues predominate over residues 293–306; the sequence is YMKETDSSSEKDAE. Residues 351–363 show a composition bias toward acidic residues; it reads LGEEGTDSEDDIN. Residues 378 to 396 show a composition bias toward polar residues; that stretch reads RQSGTCSISSDAKGTSQDV. Composition is skewed to basic and acidic residues over residues 397 to 408 and 475 to 491; these read LENHEKYDRDEI and SLHD…EGKT. Positions 492 to 507 are enriched in polar residues; that stretch reads NEASTSTPTANVNQGD. HEAT repeat units lie at residues 538-576, 577-614, 633-658, 659-700, and 704-742; these read SQDG…LFPL, QAVE…RPGQ, IPKS…DFLE, NACL…SSPL, and MFIS…VFKL. A disordered region spans residues 792–860; that stretch reads PRARSGQLDP…LHPDGDRPRL (69 aa). 2 stretches are compositionally biased toward polar residues: residues 799 to 814 and 835 to 845; these read LDPN…TSPS and ALTSNSQSSDV. A compositionally biased stretch (basic and acidic residues) spans 846–859; the sequence is HQPDALHPDGDRPR. HEAT repeat units lie at residues 850 to 888, 906 to 943, 1045 to 1066, 1067 to 1105, 1112 to 1150, 1154 to 1191, 1196 to 1236, 1257 to 1280, 1281 to 1317, and 1347 to 1367; these read ALHP…STDK, DQVR…HESR, DYLE…TVKS, YMCS…DPNC, ADAI…INKR, QAAE…ASRN, LRAH…KVEQ, RHFV…NKTL, ALNG…KHPK, and QVLV…NTIL.

The protein belongs to the protein kinase superfamily. Ser/Thr protein kinase family. Post-translationally, autophosphorylated. In terms of tissue distribution, expressed in both the sporophytic and the gametophytic tissues, especially in dividing cells. Mostly present in flower buds and mature flowers. Also accumulates in embryos and in roots.

The protein localises to the cytoplasm. It localises to the cytoskeleton. The protein resides in the microtubule organizing center. Its subcellular location is the nucleus. It is found in the nucleolus. The protein localises to the cell membrane. The catalysed reaction is L-seryl-[protein] + ATP = O-phospho-L-seryl-[protein] + ADP + H(+). It carries out the reaction L-threonyl-[protein] + ATP = O-phospho-L-threonyl-[protein] + ADP + H(+). In terms of biological role, serine/threonine-protein kinase involved in the spatial and temporal control system organizing cortical activities in mitotic and postmitotic cells. Required for the normal functioning of the plasma membrane in developing pollen. Involved in the regulation of cell expansion and embryo development. The sequence is that of MAP3K epsilon protein kinase 2 from Arabidopsis thaliana (Mouse-ear cress).